The sequence spans 90 residues: Probable Fe(2+)-trafficking protein (90 aa).

Belongs to the Fe(2+)-trafficking protein family.

In terms of biological role, could be a mediator in iron transactions between iron acquisition and iron-requiring processes, such as synthesis and/or repair of Fe-S clusters in biosynthetic enzymes. The protein is Probable Fe(2+)-trafficking protein of Polaromonas sp. (strain JS666 / ATCC BAA-500).